We begin with the raw amino-acid sequence, 182 residues long: Large ribosomal subunit protein uL6 (182 aa).

It belongs to the universal ribosomal protein uL6 family. Part of the 50S ribosomal subunit.

Its function is as follows. This protein binds to the 23S rRNA, and is important in its secondary structure. It is located near the subunit interface in the base of the L7/L12 stalk, and near the tRNA binding site of the peptidyltransferase center. The chain is Large ribosomal subunit protein uL6 from Karelsulcia muelleri (strain GWSS) (Sulcia muelleri).